A 471-amino-acid chain; its full sequence is V-type ATP synthase beta chain (471 aa).

The protein belongs to the ATPase alpha/beta chains family.

Produces ATP from ADP in the presence of a proton gradient across the membrane. The V-type beta chain is a regulatory subunit. This chain is V-type ATP synthase beta chain, found in Deinococcus deserti (strain DSM 17065 / CIP 109153 / LMG 22923 / VCD115).